Consider the following 126-residue polypeptide: Large ribosomal subunit protein uL22 (126 aa).

This sequence belongs to the universal ribosomal protein uL22 family. In terms of assembly, part of the 50S ribosomal subunit.

This protein binds specifically to 23S rRNA; its binding is stimulated by other ribosomal proteins, e.g. L4, L17, and L20. It is important during the early stages of 50S assembly. It makes multiple contacts with different domains of the 23S rRNA in the assembled 50S subunit and ribosome. Functionally, the globular domain of the protein is located near the polypeptide exit tunnel on the outside of the subunit, while an extended beta-hairpin is found that lines the wall of the exit tunnel in the center of the 70S ribosome. This is Large ribosomal subunit protein uL22 from Bradyrhizobium sp. (strain BTAi1 / ATCC BAA-1182).